Reading from the N-terminus, the 1076-residue chain is DNA-directed RNA polymerase subunit beta (1076 aa).

This sequence belongs to the RNA polymerase beta chain family. As to quaternary structure, in plastids the minimal PEP RNA polymerase catalytic core is composed of four subunits: alpha, beta, beta', and beta''. When a (nuclear-encoded) sigma factor is associated with the core the holoenzyme is formed, which can initiate transcription.

It localises to the plastid. The protein localises to the chloroplast. It carries out the reaction RNA(n) + a ribonucleoside 5'-triphosphate = RNA(n+1) + diphosphate. DNA-dependent RNA polymerase catalyzes the transcription of DNA into RNA using the four ribonucleoside triphosphates as substrates. The protein is DNA-directed RNA polymerase subunit beta of Agrostis stolonifera (Creeping bentgrass).